Here is a 310-residue protein sequence, read N- to C-terminus: Homocysteine S-methyltransferase (310 aa).

Residues 1–310 (MSQNNPLRAL…ADIAALKARS (310 aa)) enclose the Hcy-binding domain. The Zn(2+) site is built by Cys-229, Cys-295, and Cys-296.

Monomer. It depends on Zn(2+) as a cofactor.

The catalysed reaction is S-methyl-L-methionine + L-homocysteine = 2 L-methionine + H(+). In terms of biological role, catalyzes methyl transfer from S-methylmethionine or S-adenosylmethionine (less efficient) to homocysteine, selenohomocysteine and less efficiently selenocysteine. In Escherichia coli (strain K12), this protein is Homocysteine S-methyltransferase (mmuM).